The following is a 242-amino-acid chain: Probable transcriptional regulatory protein XOO1543 (242 aa).

It belongs to the TACO1 family.

Its subcellular location is the cytoplasm. In Xanthomonas oryzae pv. oryzae (strain MAFF 311018), this protein is Probable transcriptional regulatory protein XOO1543.